Reading from the N-terminus, the 335-residue chain is Holliday junction branch migration complex subunit RuvB (335 aa).

Residues 1-183 (MDERIISSET…FGVIDHLEFY (183 aa)) form a large ATPase domain (RuvB-L) region. ATP contacts are provided by residues Leu22, Arg23, Gly64, Lys67, Thr68, Thr69, 130–132 (EDY), Arg173, Tyr183, and Arg220. Thr68 provides a ligand contact to Mg(2+). The segment at 184-254 (TEEQLTEIVL…LAKEALTLLQ (71 aa)) is small ATPAse domain (RuvB-S). The head domain (RuvB-H) stretch occupies residues 257 to 335 (PRGLDTIDQK…HLGISYEKEV (79 aa)). Residues Arg293, Arg312, and Arg317 each contribute to the DNA site.

Belongs to the RuvB family. In terms of assembly, homohexamer. Forms an RuvA(8)-RuvB(12)-Holliday junction (HJ) complex. HJ DNA is sandwiched between 2 RuvA tetramers; dsDNA enters through RuvA and exits via RuvB. An RuvB hexamer assembles on each DNA strand where it exits the tetramer. Each RuvB hexamer is contacted by two RuvA subunits (via domain III) on 2 adjacent RuvB subunits; this complex drives branch migration. In the full resolvosome a probable DNA-RuvA(4)-RuvB(12)-RuvC(2) complex forms which resolves the HJ.

The protein resides in the cytoplasm. The enzyme catalyses ATP + H2O = ADP + phosphate + H(+). In terms of biological role, the RuvA-RuvB-RuvC complex processes Holliday junction (HJ) DNA during genetic recombination and DNA repair, while the RuvA-RuvB complex plays an important role in the rescue of blocked DNA replication forks via replication fork reversal (RFR). RuvA specifically binds to HJ cruciform DNA, conferring on it an open structure. The RuvB hexamer acts as an ATP-dependent pump, pulling dsDNA into and through the RuvAB complex. RuvB forms 2 homohexamers on either side of HJ DNA bound by 1 or 2 RuvA tetramers; 4 subunits per hexamer contact DNA at a time. Coordinated motions by a converter formed by DNA-disengaged RuvB subunits stimulates ATP hydrolysis and nucleotide exchange. Immobilization of the converter enables RuvB to convert the ATP-contained energy into a lever motion, pulling 2 nucleotides of DNA out of the RuvA tetramer per ATP hydrolyzed, thus driving DNA branch migration. The RuvB motors rotate together with the DNA substrate, which together with the progressing nucleotide cycle form the mechanistic basis for DNA recombination by continuous HJ branch migration. Branch migration allows RuvC to scan DNA until it finds its consensus sequence, where it cleaves and resolves cruciform DNA. The sequence is that of Holliday junction branch migration complex subunit RuvB from Listeria monocytogenes serovar 1/2a (strain ATCC BAA-679 / EGD-e).